The primary structure comprises 933 residues: MSSTILPTDPDVLPNRADDSAFIEEDTRLRNDIRLLGRILGDTVRDQEGSAVFDLVERIRQTSIRFHRDEDKPARRELEAILDDMSASDTVKIVRAFSYFSHLANIAEDQNNIRQMRAGSTAGSAPRAGMLAKTLAHAREEGIGARELREFFKTALVSPVLTAHPTEVRRKSTMDREMEVAALLDQRERLQLTADEWAQNEEQLRRAVVTLWKTNLLRRTKLTVLDEVANGLSFYDYTFLREVPRLHSALEDQLGGGEGGEAEEELASFLRMGSWIGGDRDGNPFVTAEVLQGTLRLQSARVLRFYLDELHELGSELSLASHLAPITEDVRLLAERSPDHSPHRRHEPYRLAVSGIYARLAATAAKLKIDSVRAPVGEAEIYANVQEFKADLDAIHYSLTKYNAGVIARGRLRQLRRAADCFGFHLASLDMRQNSAVHERTMGELMDAARPTSSYLALDEDERIALLTGELRSARPLTSIFIKYSDETVGELAVLHEAARAHSIYGEAAIPQCIISMTKGVSDLLEVAVLLKEVGLIDPSGRCAINIVPLFETIEDLQACAAIMDRLLAIPEYRRLVDSRGGVQEVMLGYSDSNKDGGFVTSGWELYKAEIGLLDVFEHHGVRLRLFHGRGGSVGRGGGPSYDAIVAQPGGAVNGQIRITEQGEIITSKYSNREVGRNNLEILTAATLEASLLQPRRSAPHHDYLEAMEQLSALAFKAYRGLVYETDGFVDYFWSSTVINEISTLNIGSRPASRKKTRAIEDLRAIPWVFSWAQCRLMLPGWYGFGSAVEAWVAEHPDKGTAFLQSMYQEWPFFRMLLSNMDMVLSKSSIAIASRYADLVPDEELRHKIFGRIRIEWHASVDSLLAIMGHERLLQGNPLLERSIRHRFPYLDPLNHVQVQLLREHRTHDPDEQVLRGIQLTINGISAGLRNSG.

Residues His-164 and Lys-595 contribute to the active site.

Belongs to the PEPCase type 1 family. The cofactor is Mg(2+).

It carries out the reaction oxaloacetate + phosphate = phosphoenolpyruvate + hydrogencarbonate. In terms of biological role, forms oxaloacetate, a four-carbon dicarboxylic acid source for the tricarboxylic acid cycle. The chain is Phosphoenolpyruvate carboxylase from Rhodopseudomonas palustris (strain BisB5).